Consider the following 650-residue polypeptide: Acetyl-coenzyme A synthetase (650 aa).

CoA contacts are provided by residues 189 to 192 (RGGK), threonine 307, and asparagine 331. ATP is bound by residues 383 to 385 (GEP), 407 to 412 (DTWWQT), aspartate 496, and arginine 511. Serine 519 contacts CoA. Arginine 522 provides a ligand contact to ATP. Valine 533, histidine 535, and valine 538 together coordinate Mg(2+). Residue arginine 580 participates in CoA binding. Position 605 is an N6-acetyllysine (lysine 605).

It belongs to the ATP-dependent AMP-binding enzyme family. Mg(2+) is required as a cofactor. Post-translationally, acetylated. Deacetylation by the SIR2-homolog deacetylase activates the enzyme.

It carries out the reaction acetate + ATP + CoA = acetyl-CoA + AMP + diphosphate. Its function is as follows. Catalyzes the conversion of acetate into acetyl-CoA (AcCoA), an essential intermediate at the junction of anabolic and catabolic pathways. AcsA undergoes a two-step reaction. In the first half reaction, AcsA combines acetate with ATP to form acetyl-adenylate (AcAMP) intermediate. In the second half reaction, it can then transfer the acetyl group from AcAMP to the sulfhydryl group of CoA, forming the product AcCoA. The sequence is that of Acetyl-coenzyme A synthetase from Syntrophobacter fumaroxidans (strain DSM 10017 / MPOB).